Consider the following 533-residue polypeptide: MHWADVIAEDVLNKSGKHLVATGITPSGHIHIGNMREVVTADAAYRALLDMGADARLIYIADNYDPLRKVYPFLPESYAEHVGKPISEVPCPCGDCANYAEHFLKPFIEALRRLGINPEVLRADEMYRAGLYTEAIKTALAKRDEIAKILEEVSGKTVAEDWSPFNPRCNECGKITTTKVAGFDLEAETVDYVCACGHSGTVPMAGGGKLTWRVDWPARWAVLGVTVEPFGKDHASKGGSYDTGKRIVREIYGHEPPFPIVYEWIMLGKRGAMSSSTGVVVSISDMLEVVPPEVLRYLIIRTKPEKHIQFDPGQPLLNLVDEYERLRDKFRENDPSLGDFEKRIYELSRATGICHPEIPFKQMVTIYQVARGDFEQVLKIVKRSGFSTENEKCIRELADNVSRWLELYAPPFAKFSVKEKVPVQTATLSELQKAFLGAFADLIETKGKISGEEYHMLVYSAKDEGSELNRLIAQKVNVPVPQVDPKDLFKAIYTSILGQSSGPKAGWFLSSFEKGFLITRFREASTYNPEKSS.

The short motif at P26–N34 is the 'HIGH' region element. The 'KMSKS' region signature appears at A272–S276.

It belongs to the class-I aminoacyl-tRNA synthetase family.

The protein localises to the cytoplasm. The catalysed reaction is tRNA(Lys) + L-lysine + ATP = L-lysyl-tRNA(Lys) + AMP + diphosphate. The polypeptide is Lysine--tRNA ligase 1 (Methanosarcina acetivorans (strain ATCC 35395 / DSM 2834 / JCM 12185 / C2A)).